The following is a 270-amino-acid chain: Undecaprenyl-diphosphatase 1 (270 aa).

Helical transmembrane passes span 79–99 (NLLL…LLFS), 105–125 (VLFN…IILW), 155–175 (LALI…LFLG), 182–202 (TEFS…YSLI), 215–235 (VFAV…RALL), and 242–262 (SFAV…GTWW).

This sequence belongs to the UppP family.

Its subcellular location is the cell inner membrane. The enzyme catalyses di-trans,octa-cis-undecaprenyl diphosphate + H2O = di-trans,octa-cis-undecaprenyl phosphate + phosphate + H(+). Its function is as follows. Catalyzes the dephosphorylation of undecaprenyl diphosphate (UPP). Confers resistance to bacitracin. The polypeptide is Undecaprenyl-diphosphatase 1 (Chromobacterium violaceum (strain ATCC 12472 / DSM 30191 / JCM 1249 / CCUG 213 / NBRC 12614 / NCIMB 9131 / NCTC 9757 / MK)).